The chain runs to 105 residues: Putative membrane protein insertion efficiency factor (105 aa).

It belongs to the UPF0161 family.

It localises to the cell membrane. Functionally, could be involved in insertion of integral membrane proteins into the membrane. This chain is Putative membrane protein insertion efficiency factor, found in Bifidobacterium longum subsp. infantis (strain ATCC 15697 / DSM 20088 / JCM 1222 / NCTC 11817 / S12).